The sequence spans 377 residues: Lipoyl synthase, mitochondrial (377 aa).

The [4Fe-4S] cluster site is built by Cys103, Cys108, Cys114, Cys134, Cys138, Cys141, and Ser349. The region spanning 119–338 is the Radical SAM core domain; the sequence is EHGTQTATIM…EERGNELGFL (220 aa).

The protein belongs to the radical SAM superfamily. Lipoyl synthase family. Requires [4Fe-4S] cluster as cofactor.

Its subcellular location is the mitochondrion. The enzyme catalyses [[Fe-S] cluster scaffold protein carrying a second [4Fe-4S](2+) cluster] + N(6)-octanoyl-L-lysyl-[protein] + 2 oxidized [2Fe-2S]-[ferredoxin] + 2 S-adenosyl-L-methionine + 4 H(+) = [[Fe-S] cluster scaffold protein] + N(6)-[(R)-dihydrolipoyl]-L-lysyl-[protein] + 4 Fe(3+) + 2 hydrogen sulfide + 2 5'-deoxyadenosine + 2 L-methionine + 2 reduced [2Fe-2S]-[ferredoxin]. It functions in the pathway protein modification; protein lipoylation via endogenous pathway; protein N(6)-(lipoyl)lysine from octanoyl-[acyl-carrier-protein]: step 2/2. Functionally, catalyzes the radical-mediated insertion of two sulfur atoms into the C-6 and C-8 positions of the octanoyl moiety bound to the lipoyl domains of lipoate-dependent enzymes, thereby converting the octanoylated domains into lipoylated derivatives. This chain is Lipoyl synthase, mitochondrial, found in Drosophila melanogaster (Fruit fly).